We begin with the raw amino-acid sequence, 297 residues long: ER membrane protein complex subunit 2-A (297 aa).

TPR repeat units follow at residues His-87 to Asn-120, Gln-155 to Asn-188, and Tyr-192 to Asn-225.

This sequence belongs to the EMC2 family. In terms of assembly, component of the ER membrane protein complex (EMC).

It is found in the endoplasmic reticulum membrane. In terms of biological role, part of the endoplasmic reticulum membrane protein complex (EMC) that enables the energy-independent insertion into endoplasmic reticulum membranes of newly synthesized membrane proteins. Preferentially accommodates proteins with transmembrane domains that are weakly hydrophobic or contain destabilizing features such as charged and aromatic residues. Involved in the cotranslational insertion of multi-pass membrane proteins in which stop-transfer membrane-anchor sequences become ER membrane spanning helices. It is also required for the post-translational insertion of tail-anchored/TA proteins in endoplasmic reticulum membranes. By mediating the proper cotranslational insertion of N-terminal transmembrane domains in an N-exo topology, with translocated N-terminus in the lumen of the ER, controls the topology of multi-pass membrane proteins. By regulating the insertion of various proteins in membranes, it is indirectly involved in many cellular processes. This chain is ER membrane protein complex subunit 2-A (emc2-a), found in Xenopus laevis (African clawed frog).